We begin with the raw amino-acid sequence, 469 residues long: Citrate synthase, mitochondrial (469 aa).

The N-terminal 28 residues, M1 to Q28, are a transit peptide targeting the mitochondrion. Residues H304, H350, and D405 contribute to the active site.

It belongs to the citrate synthase family. In terms of assembly, homodimer.

Its subcellular location is the mitochondrion matrix. It carries out the reaction oxaloacetate + acetyl-CoA + H2O = citrate + CoA + H(+). It functions in the pathway carbohydrate metabolism; tricarboxylic acid cycle; isocitrate from oxaloacetate: step 1/2. This chain is Citrate synthase, mitochondrial (MCSI), found in Fragaria ananassa (Strawberry).